The primary structure comprises 546 residues: MAAKDIRFGEDARTRMVRGVNVLANAVKATLGPKGRNVVLEKSFGAPTITKDGVSVAKEIELADKFENMGAQMVKEVASKTNDNAGDGTTTATVLAQALIREGAKAVAAGMNPMDLKRGIDQAVKAAVVELKNISKPTTDDKAIAQVGTISANSDESIGNIIAEAMKKVGKEGVITVEEGSGLENELDVVEGMQFDRGYLSPYFINNQQSQSADLDDPFILLHDKKISNVRDLLPVLEGVAKAGKPLLIVAEEVEGEALATLVVNTIRGIVKVVAVKAPGFGDRRKAMLEDMAVLTGGTVISEEVGLALEKATIKDLGRAKKVQVSKENTTIIDGAGDTAAIESRVGQIKTQIEDTSSDYDREKLQERVAKLAGGVAVIKVGASTEIEMKEKKARVEDALHATRAAVEEGVVPGGGVALVRALVAVGELKGANEDQTHGIQIALRAMEAPLREIVANAGEEPSVILNKVKEGSGNYGYNAANGEFGDMVEFGILDPTKVTRSALQNAASIAGLMITTEAMVADAPKKDEPAMPAGGGMGGMGGMDF.

Residues 30–33, K51, 87–91, G415, 479–481, and D495 contribute to the ATP site; these read TLGP, DGTTT, and NAA. A disordered region spans residues 526–546; the sequence is KKDEPAMPAGGGMGGMGGMDF. The span at 534–546 shows a compositional bias: gly residues; the sequence is AGGGMGGMGGMDF.

It belongs to the chaperonin (HSP60) family. In terms of assembly, forms a cylinder of 14 subunits composed of two heptameric rings stacked back-to-back. Interacts with the co-chaperonin GroES.

The protein resides in the cytoplasm. It catalyses the reaction ATP + H2O + a folded polypeptide = ADP + phosphate + an unfolded polypeptide.. Functionally, together with its co-chaperonin GroES, plays an essential role in assisting protein folding. The GroEL-GroES system forms a nano-cage that allows encapsulation of the non-native substrate proteins and provides a physical environment optimized to promote and accelerate protein folding. The polypeptide is Chaperonin GroEL (Xanthomonas euvesicatoria pv. vesicatoria (strain 85-10) (Xanthomonas campestris pv. vesicatoria)).